The sequence spans 26 residues: uncharacterized protein (26 aa).

This is an uncharacterized protein from Archaeoglobus fulgidus (strain ATCC 49558 / DSM 4304 / JCM 9628 / NBRC 100126 / VC-16).